A 558-amino-acid polypeptide reads, in one-letter code: Potassium-transporting ATPase potassium-binding subunit (558 aa).

The next 12 helical transmembrane spans lie at 1–21 (MEII…SGYL), 66–86 (FNGF…WLFL), 127–147 (MIVM…VCIA), 166–186 (IVRF…ILLM), 245–265 (IWSN…MLFL), 281–301 (ALIL…LTMW), 327–347 (FGAG…TGSV), 354–374 (LTPL…VFGG), 377–397 (VGLM…SLMV), 416–436 (IVLV…LAFM), 482–502 (ISTG…QLMI), and 531–551 (IVFI…LGPI).

It belongs to the KdpA family. The system is composed of three essential subunits: KdpA, KdpB and KdpC.

The protein localises to the cell membrane. Functionally, part of the high-affinity ATP-driven potassium transport (or Kdp) system, which catalyzes the hydrolysis of ATP coupled with the electrogenic transport of potassium into the cytoplasm. This subunit binds the extracellular potassium ions and delivers the ions to the membrane domain of KdpB through an intramembrane tunnel. This Staphylococcus aureus (strain MSSA476) protein is Potassium-transporting ATPase potassium-binding subunit.